The chain runs to 130 residues: Small ribosomal subunit protein uS9 (130 aa).

The protein belongs to the universal ribosomal protein uS9 family.

The chain is Small ribosomal subunit protein uS9 from Burkholderia pseudomallei (strain K96243).